A 250-amino-acid polypeptide reads, in one-letter code: MSNDPTHQFQIFKIVPIEIGGIDFSFTNASLFMAASAAVAVGFLYFATSNRAIVPGRSQSVAEMSYEFIANMLKEGAGKQGMKFFPLVFSLFMFVLTANLLGMFPYFFTITSQIIVTFALAILVIGTVLVYGFYKHGFHFLNVFVPSGVPGILLPLVVSIEIISFLSRPISLSVRLFANMLAGHITLKVFAGFVASLGALGAVGVGGAVLPLIMTVALTGLEFLVAFLQAYVFAVLTCMYLNDAIHPGGH.

6 consecutive transmembrane segments (helical) span residues 29–49, 84–104, 114–134, 143–163, 193–213, and 216–236; these read ASLF…FATS, FFPL…LGMF, IIVT…YGFY, VFVP…IEII, FVAS…LPLI, and VALT…FAVL.

The protein belongs to the ATPase A chain family. F-type ATPases have 2 components, CF(1) - the catalytic core - and CF(0) - the membrane proton channel. CF(1) has five subunits: alpha(3), beta(3), gamma(1), delta(1), epsilon(1). CF(0) has three main subunits: a(1), b(2) and c(9-12). The alpha and beta chains form an alternating ring which encloses part of the gamma chain. CF(1) is attached to CF(0) by a central stalk formed by the gamma and epsilon chains, while a peripheral stalk is formed by the delta and b chains.

It localises to the cell inner membrane. Its function is as follows. Key component of the proton channel; it plays a direct role in the translocation of protons across the membrane. The polypeptide is ATP synthase subunit a (Rhizobium leguminosarum bv. trifolii (strain WSM2304)).